The sequence spans 106 residues: Small ribosomal subunit protein bS16 (106 aa).

The protein belongs to the bacterial ribosomal protein bS16 family.

The protein is Small ribosomal subunit protein bS16 of Protochlamydia amoebophila (strain UWE25).